The primary structure comprises 269 residues: Phosphate import ATP-binding protein PstB (269 aa).

Residues 22 to 264 (AEVRDLNFYY…PVQQKTADYV (243 aa)) form the ABC transporter domain. 54-61 (GPSGCGKT) is a binding site for ATP.

Belongs to the ABC transporter superfamily. Phosphate importer (TC 3.A.1.7) family. In terms of assembly, the complex is composed of two ATP-binding proteins (PstB), two transmembrane proteins (PstC and PstA) and a solute-binding protein (PstS).

Its subcellular location is the cell inner membrane. The catalysed reaction is phosphate(out) + ATP + H2O = ADP + 2 phosphate(in) + H(+). In terms of biological role, part of the ABC transporter complex PstSACB involved in phosphate import. Responsible for energy coupling to the transport system. The protein is Phosphate import ATP-binding protein PstB of Thermosynechococcus vestitus (strain NIES-2133 / IAM M-273 / BP-1).